The following is a 336-amino-acid chain: F420-dependent glucose-6-phosphate dehydrogenase (336 aa).

Position 39 (aspartate 39) interacts with coenzyme F420-(gamma-Glu)n. Histidine 40 serves as the catalytic Proton donor. Coenzyme F420-(gamma-Glu)n contacts are provided by residues threonine 76 and 107 to 108 (TG). Glutamate 109 functions as the Proton acceptor in the catalytic mechanism. Residues asparagine 112, 177-178 (GG), and 180-181 (LV) contribute to the coenzyme F420-(gamma-Glu)n site. Substrate contacts are provided by threonine 195, lysine 198, lysine 259, and arginine 283.

The protein belongs to the F420-dependent glucose-6-phosphate dehydrogenase family. As to quaternary structure, homodimer.

It carries out the reaction oxidized coenzyme F420-(gamma-L-Glu)(n) + D-glucose 6-phosphate + H(+) = 6-phospho-D-glucono-1,5-lactone + reduced coenzyme F420-(gamma-L-Glu)(n). Its function is as follows. Catalyzes the coenzyme F420-dependent oxidation of glucose 6-phosphate (G6P) to 6-phosphogluconolactone. The sequence is that of F420-dependent glucose-6-phosphate dehydrogenase from Nocardia farcinica (strain IFM 10152).